The sequence spans 302 residues: Glycine--tRNA ligase alpha subunit (302 aa).

Belongs to the class-II aminoacyl-tRNA synthetase family. As to quaternary structure, tetramer of two alpha and two beta subunits.

The protein localises to the cytoplasm. The enzyme catalyses tRNA(Gly) + glycine + ATP = glycyl-tRNA(Gly) + AMP + diphosphate. The protein is Glycine--tRNA ligase alpha subunit of Wigglesworthia glossinidia brevipalpis.